Reading from the N-terminus, the 357-residue chain is DNA replication and repair protein RecF (357 aa).

30–37 (GANGSGKT) is a binding site for ATP.

This sequence belongs to the RecF family.

It localises to the cytoplasm. Functionally, the RecF protein is involved in DNA metabolism; it is required for DNA replication and normal SOS inducibility. RecF binds preferentially to single-stranded, linear DNA. It also seems to bind ATP. In Escherichia coli O7:K1 (strain IAI39 / ExPEC), this protein is DNA replication and repair protein RecF.